The sequence spans 67 residues: Small ribosomal subunit protein eS31 (67 aa).

C31, C34, C49, and C52 together coordinate Zn(2+). A C4-type zinc finger spans residues 31-52 (CPKCGAGVFMAEHLNRFACGKC).

This sequence belongs to the eukaryotic ribosomal protein eS31 family. As to quaternary structure, part of the 30S ribosomal subunit. It depends on Zn(2+) as a cofactor.

The sequence is that of Small ribosomal subunit protein eS31 from Methanococcus maripaludis (strain C5 / ATCC BAA-1333).